Consider the following 182-residue polypeptide: Glycerol-3-phosphate acyltransferase 1 (182 aa).

5 consecutive transmembrane segments (helical) span residues 5–25 (MQFL…AYIV), 54–74 (GYFI…VSIA), 81–101 (STFV…PIVF), 117–137 (IAFD…FYLI), and 157–177 (ILYS…VLIL).

Belongs to the PlsY family. Probably interacts with PlsX.

The protein localises to the cell membrane. The catalysed reaction is an acyl phosphate + sn-glycerol 3-phosphate = a 1-acyl-sn-glycero-3-phosphate + phosphate. It functions in the pathway lipid metabolism; phospholipid metabolism. In terms of biological role, catalyzes the transfer of an acyl group from acyl-phosphate (acyl-PO(4)) to glycerol-3-phosphate (G3P) to form lysophosphatidic acid (LPA). This enzyme utilizes acyl-phosphate as fatty acyl donor, but not acyl-CoA or acyl-ACP. This is Glycerol-3-phosphate acyltransferase 1 from Bacillus cereus (strain ATCC 10987 / NRS 248).